The chain runs to 1165 residues: DNA-directed RNA polymerase subunit beta (1165 aa).

Belongs to the RNA polymerase beta chain family. In terms of assembly, the RNAP catalytic core consists of 2 alpha, 1 beta, 1 beta' and 1 omega subunit. When a sigma factor is associated with the core the holoenzyme is formed, which can initiate transcription.

The catalysed reaction is RNA(n) + a ribonucleoside 5'-triphosphate = RNA(n+1) + diphosphate. DNA-dependent RNA polymerase catalyzes the transcription of DNA into RNA using the four ribonucleoside triphosphates as substrates. This chain is DNA-directed RNA polymerase subunit beta, found in Leifsonia xyli subsp. xyli (strain CTCB07).